Reading from the N-terminus, the 213-residue chain is Outer-membrane lipoprotein carrier protein (213 aa).

The first 18 residues, 1–18 (MKYFATICIAAYAGLAGA), serve as a signal peptide directing secretion.

Belongs to the LolA family. In terms of assembly, monomer.

It is found in the periplasm. Participates in the translocation of lipoproteins from the inner membrane to the outer membrane. Only forms a complex with a lipoprotein if the residue after the N-terminal Cys is not an aspartate (The Asp acts as a targeting signal to indicate that the lipoprotein should stay in the inner membrane). The protein is Outer-membrane lipoprotein carrier protein of Albidiferax ferrireducens (strain ATCC BAA-621 / DSM 15236 / T118) (Rhodoferax ferrireducens).